Consider the following 590-residue polypeptide: Cytosolic Fe-S cluster assembly factor nar1 (590 aa).

[4Fe-4S] cluster-binding residues include Cys20, Cys62, Cys65, Cys68, Cys214, Cys269, Cys456, and Cys460.

The protein belongs to the NARF family.

Its function is as follows. Component of the cytosolic Fe/S protein assembly machinery. Required for maturation of extramitochondrial Fe/S proteins. May play a role in the transfer of pre-assembled Fe/S clusters to target apoproteins. The sequence is that of Cytosolic Fe-S cluster assembly factor nar1 (nar1) from Talaromyces marneffei (strain ATCC 18224 / CBS 334.59 / QM 7333) (Penicillium marneffei).